Here is an 81-residue protein sequence, read N- to C-terminus: Cortexin-2 (81 aa).

A helical transmembrane segment spans residues 29 to 49; sequence TGFAFVGILCIFLGLLIIRCF.

The protein belongs to the cortexin family.

It is found in the membrane. This is Cortexin-2 (CTXN2) from Homo sapiens (Human).